The chain runs to 88 residues: Cytochrome c oxidase subunit 6B2 (88 aa).

The interval 1-22 (MLDVEAQEPPKGKWSTPPFDPR) is disordered. The 47-residue stretch at 29 to 75 (IRNCYQNFLDYHRCLKTRTRRGKSTQPCEYYFRVYHSLCPISWVESW) folds into the CHCH domain. The short motif at 32-42 (CYQNFLDYHRC) is the Cx9C motif element. 2 cysteine pairs are disulfide-bonded: C32–C67 and C42–C56. The Cx10C motif signature appears at 56 to 67 (CEYYFRVYHSLC).

Belongs to the cytochrome c oxidase subunit 6B family. Component of the cytochrome c oxidase (complex IV, CIV), a multisubunit enzyme composed of 14 subunits. The complex is composed of a catalytic core of 3 subunits MT-CO1, MT-CO2 and MT-CO3, encoded in the mitochondrial DNA, and 11 supernumerary subunits COX4I1 (or COX4I2), COX5A, COX5B, COX6A1 (or COX6A2), COX6B1 (or COX6B2), COX6C, COX7A2 (or COX7A1), COX7B, COX7C, COX8A and NDUFA4, which are encoded in the nuclear genome. The complex exists as a monomer or a dimer and forms supercomplexes (SCs) in the inner mitochondrial membrane with NADH-ubiquinone oxidoreductase (complex I, CI) and ubiquinol-cytochrome c oxidoreductase (cytochrome b-c1 complex, complex III, CIII), resulting in different assemblies (supercomplex SCI(1)III(2)IV(1) and megacomplex MCI(2)III(2)IV(2)). As to expression, testis specific. Weak expression in thymus and heart. Expressed in cancer cell lines.

It is found in the mitochondrion inner membrane. The protein operates within energy metabolism; oxidative phosphorylation. Its function is as follows. Component of the cytochrome c oxidase, the last enzyme in the mitochondrial electron transport chain which drives oxidative phosphorylation. The respiratory chain contains 3 multisubunit complexes succinate dehydrogenase (complex II, CII), ubiquinol-cytochrome c oxidoreductase (cytochrome b-c1 complex, complex III, CIII) and cytochrome c oxidase (complex IV, CIV), that cooperate to transfer electrons derived from NADH and succinate to molecular oxygen, creating an electrochemical gradient over the inner membrane that drives transmembrane transport and the ATP synthase. Cytochrome c oxidase is the component of the respiratory chain that catalyzes the reduction of oxygen to water. Electrons originating from reduced cytochrome c in the intermembrane space (IMS) are transferred via the dinuclear copper A center (CU(A)) of subunit 2 and heme A of subunit 1 to the active site in subunit 1, a binuclear center (BNC) formed by heme A3 and copper B (CU(B)). The BNC reduces molecular oxygen to 2 water molecules using 4 electrons from cytochrome c in the IMS and 4 protons from the mitochondrial matrix. This is Cytochrome c oxidase subunit 6B2 (COX6B2) from Homo sapiens (Human).